The sequence spans 849 residues: Villin-1 (849 aa).

Gelsolin-like repeat units follow at residues 30–107 (IEKS…DKFL), 147–213 (RVTE…EDGK), 262–335 (VPVE…TVEF), 405–475 (QEQL…PEMF), and 527–566 (AIQVDLAASSLNSSHCYILQAGGSFFTWLGSLSSPSDHNL). The segment at 739–849 (ETPERSLRKS…AVATGTPRRL (111 aa)) is disordered. Low complexity-rich tracts occupy residues 747–782 (KSSSSSLPRRSPGTSSSEPTTPEQRAAARTFASAST) and 791–823 (PAALSPSLSTPSPSPRSRSSASSSPASWNSTPS).

This sequence belongs to the villin/gelsolin family.

The protein resides in the cytoplasm. Its subcellular location is the cytoskeleton. In terms of biological role, ca(2+)-independent actin-binding protein. Binds actin microfilaments (MFs). Involved in actin filament bundling, severing and capping. Caps the barbed end of actin filaments and protects them from disassembly. Promotes VLN3-mediated MF severing. The sequence is that of Villin-1 from Oryza sativa subsp. indica (Rice).